Reading from the N-terminus, the 1598-residue chain is Serine/threonine-protein kinase Nek1 (1598 aa).

One can recognise a Protein kinase domain in the interval 106-380 (YEVIRQIGAG…ALQCLGYTIF (275 aa)). Residues 112 to 120 (IGAGRFGEV) and Lys135 contribute to the ATP site. Residue Asp240 is the Proton acceptor of the active site.

Belongs to the protein kinase superfamily. NEK Ser/Thr protein kinase family. NIMA subfamily.

The protein resides in the cytoplasm. Its subcellular location is the cytoskeleton. It is found in the microtubule organizing center. It localises to the centrosome. The protein localises to the spindle pole. It carries out the reaction L-seryl-[protein] + ATP = O-phospho-L-seryl-[protein] + ADP + H(+). The catalysed reaction is L-threonyl-[protein] + ATP = O-phospho-L-threonyl-[protein] + ADP + H(+). Phosphorylation status of the T-loop (amino acids 267-293) modulates kinase activity and subcellular localization of the protein. Functionally, probable serine/threonine-protein kinase. Involved in controlling centrosome splitting. Promotes separation of the centrosome outer cores. This is Serine/threonine-protein kinase Nek1 from Toxoplasma gondii (strain ATCC 50611 / Me49).